We begin with the raw amino-acid sequence, 126 residues long: Flagellar protein FliT (126 aa).

The required for homodimerization stretch occupies residues 1-50; sequence MVSPHRLLKDYQQLLSLSQKILHLAISGQWDTLVEQEIVYVQSVEGLVNT. Positions 60–98 are fliD binding; sequence MRLHLRQILQEVMDNEAKVKQLLQKRMDELSSLMGQSLK.

The protein belongs to the FliT family. As to quaternary structure, homodimer. Interacts with FliD and FlhC.

It is found in the cytoplasm. Its subcellular location is the cytosol. Functionally, dual-function protein that regulates the transcription of class 2 flagellar operons and that also acts as an export chaperone for the filament-capping protein FliD. As a transcriptional regulator, acts as an anti-FlhDC factor; it directly binds FlhC, thus inhibiting the binding of the FlhC/FlhD complex to class 2 promoters, resulting in decreased expression of class 2 flagellar operons. As a chaperone, effects FliD transition to the membrane by preventing its premature polymerization, and by directing it to the export apparatus. In Pectobacterium atrosepticum (strain SCRI 1043 / ATCC BAA-672) (Erwinia carotovora subsp. atroseptica), this protein is Flagellar protein FliT.